The primary structure comprises 185 residues: Ribosome-recycling factor (185 aa).

Belongs to the RRF family.

The protein localises to the cytoplasm. In terms of biological role, responsible for the release of ribosomes from messenger RNA at the termination of protein biosynthesis. May increase the efficiency of translation by recycling ribosomes from one round of translation to another. This is Ribosome-recycling factor from Actinobacillus pleuropneumoniae serotype 5b (strain L20).